We begin with the raw amino-acid sequence, 89 residues long: MALSAQEKDAIVKEHQTSETDTGSPEVQIALLTANINKLQGHFADHKQDHHSRRGLIRMVNQRRKLLDYLKGKDVNRYAALIQKLGLRR.

Positions 1–18 are enriched in basic and acidic residues; the sequence is MALSAQEKDAIVKEHQTS. Residues 1–25 are disordered; that stretch reads MALSAQEKDAIVKEHQTSETDTGSP.

Belongs to the universal ribosomal protein uS15 family. In terms of assembly, part of the 30S ribosomal subunit. Forms a bridge to the 50S subunit in the 70S ribosome, contacting the 23S rRNA.

One of the primary rRNA binding proteins, it binds directly to 16S rRNA where it helps nucleate assembly of the platform of the 30S subunit by binding and bridging several RNA helices of the 16S rRNA. Its function is as follows. Forms an intersubunit bridge (bridge B4) with the 23S rRNA of the 50S subunit in the ribosome. This chain is Small ribosomal subunit protein uS15, found in Teredinibacter turnerae (strain ATCC 39867 / T7901).